A 212-amino-acid polypeptide reads, in one-letter code: Thymidylate kinase (212 aa).

Ala2 is subject to N-acetylalanine. Residues 16–21 and Arg97 each bind ATP; that span reads RAGKTT. Residues 133–157 form an LID region; that stretch reads LQLQLLDAAARGEFGLERYETGTFQ. Lys182 and Arg192 together coordinate ATP.

It belongs to the thymidylate kinase family. In terms of assembly, homodimer. Mg(2+) is required as a cofactor.

The enzyme catalyses dTMP + ATP = dTDP + ADP. It functions in the pathway pyrimidine metabolism; dTTP biosynthesis. In terms of biological role, catalyzes the phosphorylation of thymidine monophosphate (dTMP) to thymidine diphosphate (dTDP), the immediate precursor for the DNA building block dTTP, with ATP as the preferred phosphoryl donor in the presence of Mg(2+). This is Thymidylate kinase (Dtymk) from Mus musculus (Mouse).